The chain runs to 333 residues: Electron transfer flavoprotein subunit alpha, mitochondrial (333 aa).

A mitochondrion-targeting transit peptide spans methionine 1–phenylalanine 19. Residues glutamine 20 to leucine 204 form a domain I region. Position 59 is an N6-acetyllysine; alternate (lysine 59). At lysine 59 the chain carries N6-succinyllysine; alternate. At lysine 62 the chain carries N6-acetyllysine. Lysine 69 is subject to N6-acetyllysine; alternate. Position 69 is an N6-succinyllysine; alternate (lysine 69). At lysine 75 the chain carries N6-acetyllysine. N6-acetyllysine; alternate is present on lysine 85. Position 85 is an N6-succinyllysine; alternate (lysine 85). Phosphothreonine is present on threonine 93. Lysine 101 and lysine 139 each carry N6-acetyllysine. At serine 140 the chain carries Phosphoserine. Lysine 158 carries the N6-acetyllysine; alternate modification. An N6-succinyllysine; alternate modification is found at lysine 158. Lysine 164 carries the post-translational modification N6-acetyllysine. Lysine 187 bears the N6-succinyllysine mark. Lysine 203 carries the N6-acetyllysine; alternate modification. N6-succinyllysine; alternate is present on lysine 203. The tract at residues threonine 205–lysine 333 is domain II. Lysine 216 carries the N6-succinyllysine modification. An FAD-binding site is contributed by arginine 223. An N6-acetyllysine; alternate mark is found at lysine 226 and lysine 232. An N6-succinyllysine; alternate mark is found at lysine 226 and lysine 232. Residues serine 248, valine 263–threonine 266, serine 281–histidine 286, and asparagine 300 each bind FAD. The residue at position 301 (lysine 301) is an N6-succinyllysine. Position 318–319 (aspartate 318–leucine 319) interacts with FAD.

It belongs to the ETF alpha-subunit/FixB family. In terms of assembly, heterodimer composed of ETFA and ETFB. Identified in a complex that contains ETFA, ETFB and ETFRF1. Interaction with ETFRF1 promotes dissociation of the bound FAD and loss of electron transfer activity. Interacts with TASOR. FAD is required as a cofactor.

Its subcellular location is the mitochondrion matrix. Its function is as follows. Heterodimeric electron transfer flavoprotein that accepts electrons from several mitochondrial dehydrogenases, including acyl-CoA dehydrogenases, glutaryl-CoA and sarcosine dehydrogenase. It transfers the electrons to the main mitochondrial respiratory chain via ETF-ubiquinone oxidoreductase (ETF dehydrogenase). Required for normal mitochondrial fatty acid oxidation and normal amino acid metabolism. The chain is Electron transfer flavoprotein subunit alpha, mitochondrial (ETFA) from Bos taurus (Bovine).